The primary structure comprises 318 residues: Putative olfactory receptor 2W6 (318 aa).

Residues 1–31 (MGFYHVGQAAFELLTSSFILVGFSDRPHLEL) lie on the Extracellular side of the membrane. A helical transmembrane segment spans residues 32–52 (IVFVVVLIFYLLTLLGNMTIV). Residues 53-63 (LLSALDSRLHT) are Cytoplasmic-facing. The chain crosses the membrane as a helical span at residues 64–84 (PMYFFLANLSFLDMCFTTGSI). At 85–103 (PQMLYNLWGPDKTISYVGC) the chain is on the extracellular side. Residues Cys103 and Cys185 are joined by a disulfide bond. Residues 104 to 124 (AIQLYFVLALGGVECVLLAVM) form a helical membrane-spanning segment. At 125–145 (AYDRYAAVCKPLHYTIIMHPR) the chain is on the cytoplasmic side. Residues 146 to 166 (LCGQLASVAWLSGFGNSLIMA) form a helical membrane-spanning segment. Residues 167-202 (PQTLMLPRCGHRRVDHFLCEMPALIGMACVDTMMLE) lie on the Extracellular side of the membrane. A helical transmembrane segment spans residues 203 to 223 (ALAFALAIFIILAPLILILIS). Over 224–245 (YGYVGGTVLRIKSAAGRKKAFN) the chain is Cytoplasmic. The helical transmembrane segment at 246 to 266 (TCSSHLIVVSLFYGTIIYMYL) threads the bilayer. The Extracellular portion of the chain corresponds to 267–277 (QPANTYSQDQG). The helical transmembrane segment at 278–298 (KFLTLFYTIVTPSVNPLIYTL) threads the bilayer. Residues 299–318 (RNKDVKEAMKKVLGKGSAEI) are Cytoplasmic-facing.

It belongs to the G-protein coupled receptor 1 family.

Its subcellular location is the cell membrane. Odorant receptor. The protein is Putative olfactory receptor 2W6 (OR2W6P) of Homo sapiens (Human).